A 220-amino-acid chain; its full sequence is Ribonuclease HII (220 aa).

The region spanning 1–210 is the RNase H type-2 domain; that stretch reads MKVAGVDEAG…ARKIEERFRK (210 aa). The a divalent metal cation site is built by Asp-7, Glu-8, and Asp-105.

The protein belongs to the RNase HII family. Requires Mn(2+) as cofactor. It depends on Mg(2+) as a cofactor.

It is found in the cytoplasm. It carries out the reaction Endonucleolytic cleavage to 5'-phosphomonoester.. Its function is as follows. Endonuclease that specifically degrades the RNA of RNA-DNA hybrids. The sequence is that of Ribonuclease HII (rnhB) from Pyrococcus horikoshii (strain ATCC 700860 / DSM 12428 / JCM 9974 / NBRC 100139 / OT-3).